A 141-amino-acid chain; its full sequence is Endoribonuclease YbeY (141 aa).

Positions 107, 111, and 117 each coordinate Zn(2+).

This sequence belongs to the endoribonuclease YbeY family. The cofactor is Zn(2+).

It localises to the cytoplasm. Its function is as follows. Single strand-specific metallo-endoribonuclease involved in late-stage 70S ribosome quality control and in maturation of the 3' terminus of the 16S rRNA. This Leptospira interrogans serogroup Icterohaemorrhagiae serovar Lai (strain 56601) protein is Endoribonuclease YbeY.